A 345-amino-acid chain; its full sequence is Anthranilate phosphoribosyltransferase (345 aa).

5-phospho-alpha-D-ribose 1-diphosphate-binding positions include Gly88, 91–92 (GD), Thr96, 98–101 (NIST), 116–124 (KHGNRSASG), and Ser128. An anthranilate-binding site is contributed by Gly88. Ser100 is a binding site for Mg(2+). Asn119 contacts anthranilate. Arg174 is an anthranilate binding site. The Mg(2+) site is built by Asp233 and Glu234.

Belongs to the anthranilate phosphoribosyltransferase family. In terms of assembly, homodimer. Requires Mg(2+) as cofactor.

The catalysed reaction is N-(5-phospho-beta-D-ribosyl)anthranilate + diphosphate = 5-phospho-alpha-D-ribose 1-diphosphate + anthranilate. The protein operates within amino-acid biosynthesis; L-tryptophan biosynthesis; L-tryptophan from chorismate: step 2/5. In terms of biological role, catalyzes the transfer of the phosphoribosyl group of 5-phosphorylribose-1-pyrophosphate (PRPP) to anthranilate to yield N-(5'-phosphoribosyl)-anthranilate (PRA). The sequence is that of Anthranilate phosphoribosyltransferase from Prochlorococcus marinus (strain NATL1A).